The primary structure comprises 244 residues: Heat shock transcription factor (244 aa).

Residues 13–108 (IPKFIMKLYK…LLGFDDSLRM (96 aa)) mediate DNA binding. Positions 123-168 (DGSLKEIVEYLYVQNQELYTELSVCKERIERQERALNGLIEILSRV) are involved in trimerization. The tract at residues 204 to 244 (EGCEPASPPLQDKGIPELSFKPGGIPHADSDTKDDNYDPFF) is disordered. A compositionally biased stretch (basic and acidic residues) spans 231 to 244 (ADSDTKDDNYDPFF).

It belongs to the HSF family. In terms of assembly, homotrimer. Homotrimerization increases the affinity of HSF1 to DNA.

The protein localises to the nucleus. In terms of biological role, DNA-binding transcription factor that specifically binds heat shock promoter elements (HSE) and activates transcription. This is Heat shock transcription factor from Encephalitozoon cuniculi (strain GB-M1) (Microsporidian parasite).